A 295-amino-acid chain; its full sequence is Histamine N-methyltransferase (295 aa).

Residue alanine 2 is modified to Blocked amino end (Ala). Residue glutamate 28 participates in substrate binding. 5 residues coordinate S-adenosyl-L-methionine: glycine 60, glutamate 89, glutamine 94, serine 120, and isoleucine 143. Asparagine 284 is a binding site for substrate.

The protein belongs to the class I-like SAM-binding methyltransferase superfamily. HNMT family. As to quaternary structure, monomer.

Its subcellular location is the cytoplasm. It catalyses the reaction histamine + S-adenosyl-L-methionine = N(tau)-methylhistamine + S-adenosyl-L-homocysteine + H(+). Functionally, inactivates histamine by N-methylation. Plays an important role in degrading histamine and in regulating the airway response to histamine. This is Histamine N-methyltransferase (Hnmt) from Rattus norvegicus (Rat).